The following is a 738-amino-acid chain: Ethylene receptor 1 (738 aa).

3 consecutive transmembrane segments (helical) span residues 23 to 43 (ISDF…IYFV), 53 to 73 (WVLV…LINL), and 92 to 112 (VLTA…IPDL). Cu cation-binding residues include C65 and H69. The region spanning 158-307 (DRHTILKTTL…VVADQVAVAL (150 aa)) is the GAF domain. The 236-residue stretch at 350–585 (VMNHEMRTPM…IFDVKLGISE (236 aa)) folds into the Histidine kinase domain. Phosphohistidine; by autocatalysis is present on H353. ADP is bound by residues 470 to 473 (NAVK), D513, K529, S544, and L548. Positions 611–729 (KVLVMDENGV…NIRDVLSDLL (119 aa)) constitute a Response regulatory domain. Residue D659 is modified to 4-aspartylphosphate. K714 participates in a covalent cross-link: Glycyl lysine isopeptide (Lys-Gly) (interchain with G-Cter in ubiquitin).

It belongs to the ethylene receptor family. In terms of assembly, homodimer; disulfide-linked. Heteromer with ERS1, ERS2, ETR2 and EIN4. Interacts with AHP1, AHP2 and AHP3. Interacts with RTE1. Interacts with EIN2. It depends on Cu cation as a cofactor. Autophosphorylated. Phosphorylation at His-353 modulates the interaction with EIN2. In terms of tissue distribution, leaves, roots, stems, seedlings, flowers, anthers, carpels and ovules.

The protein localises to the endoplasmic reticulum membrane. It catalyses the reaction ATP + protein L-histidine = ADP + protein N-phospho-L-histidine.. In terms of biological role, ethylene receptor related to bacterial two-component regulators. Acts as a redundant negative regulator of ethylene signaling. In the presence of ethylene, the auto-kinase activity of ETR1 is inhibited and the non-phosphorylated kinase domain binds tightly to the corresponding domain of EIN2. The protein is Ethylene receptor 1 of Arabidopsis thaliana (Mouse-ear cress).